Reading from the N-terminus, the 134-residue chain is Profilin-2 (134 aa).

C13 and C118 are joined by a disulfide. The Involved in PIP2 interaction signature appears at 84–100 (AVIRGKKGSGGITIKKT). T114 is modified (phosphothreonine).

It belongs to the profilin family. As to quaternary structure, occurs in many kinds of cells as a complex with monomeric actin in a 1:1 ratio. Phosphorylated by MAP kinases.

Its subcellular location is the cytoplasm. The protein resides in the cytoskeleton. Functionally, binds to actin and affects the structure of the cytoskeleton. At high concentrations, profilin prevents the polymerization of actin, whereas it enhances it at low concentrations. In Olea europaea (Common olive), this protein is Profilin-2.